Here is a 919-residue protein sequence, read N- to C-terminus: Glutamate receptor ionotropic, kainate 3 (919 aa).

The signal sequence occupies residues 1–31 (MTAPWRRLRSLVWEYWAGLLVCAFWIPDSRG). At 32–563 (MPHVIRIGGI…VFSFLNPLSP (532 aa)) the chain is on the extracellular side. N-linked (GlcNAc...) asparagine glycosylation is found at N70, N76, N278, N381, N415, N426, and N433. A disulfide bond links C99 and C350. L-glutamate-binding residues include P518, T520, and R525. 2 N-linked (GlcNAc...) asparagine glycosylation sites follow: N548 and N551. A helical transmembrane segment spans residues 564–584 (DIWMYVLLAYLGVSCVLFVIA). Residues 585–636 (RFSPYEWYDAHPCNPGSEVVENNFTLLNSFWFGMGSLMQQGSELMPKALSTR) lie on the Cytoplasmic side of the membrane. The chain crosses the membrane as a helical span at residues 637 to 657 (IIGGIWWFFTLIIISSYTANL). Over 658 to 820 (AAFLTVERME…KEASALGIQK (163 aa)) the chain is Extracellular. Positions 691, 692, and 739 each coordinate L-glutamate. Residue N752 is glycosylated (N-linked (GlcNAc...) asparagine). Residues 821 to 841 (IGGIFIVLAAGLVLSVLVAVG) traverse the membrane as a helical segment. The Cytoplasmic portion of the chain corresponds to 842-919 (EFVYKLRKTA…CSTSLAPVFP (78 aa)). S869 carries the phosphoserine modification. K887 is covalently cross-linked (Glycyl lysine isopeptide (Lys-Gly) (interchain with G-Cter in SUMO1)).

Belongs to the glutamate-gated ion channel (TC 1.A.10.1) family. GRIK3 subfamily. In terms of assembly, homotetramer, and heterotetramer with either GRIK4 or GRIK5. Can form functional heteromeric receptors with GRIK2. Interacts with PRKCABP. Interacts with NETO2.

Its subcellular location is the cell membrane. It is found in the postsynaptic cell membrane. It catalyses the reaction Ca(2+)(in) = Ca(2+)(out). Functionally, ionotropic glutamate receptor that functions as a cation-permeable ligand-gated ion channel, gated by L-glutamate and the glutamatergic agonist kainic acid. Binding of the excitatory neurotransmitter L-glutamate induces a conformation change, leading to the opening of the cation channel, and thereby converts the chemical signal to an electrical impulse. The receptor then desensitizes rapidly and enters a transient inactive state, characterized by the presence of bound agonist. In association with GRIK2, involved in presynaptic facilitation of glutamate release at hippocampal mossy fiber synapses. The polypeptide is Glutamate receptor ionotropic, kainate 3 (GRIK3) (Homo sapiens (Human)).